Consider the following 607-residue polypeptide: Glycosyltransferase 25 family member (607 aa).

The first 22 residues, Met-1 to Gly-22, serve as a signal peptide directing secretion. N-linked (GlcNAc...) asparagine glycans are attached at residues Asn-226, Asn-254, Asn-514, and Asn-565. Positions Asp-566–Leu-607 are disordered. Composition is skewed to basic and acidic residues over residues Ser-571–Leu-581 and Ile-591–Leu-607. The Prevents secretion from ER signature appears at Lys-604–Leu-607.

The protein belongs to the glycosyltransferase 25 family.

It localises to the endoplasmic reticulum lumen. The polypeptide is Glycosyltransferase 25 family member (Aedes aegypti (Yellowfever mosquito)).